The chain runs to 449 residues: Pectate lyase L (449 aa).

Residues 1 to 26 (MFKRNDRSKNGFNALRLGVSFVLASS) form the signal peptide. Cysteine 27 is lipidated: N-palmitoyl cysteine. Cysteine 27 carries S-diacylglycerol cysteine lipidation. 7 PbH1 repeats span residues 158–179 (GDFW…IYIG), 180–202 (GSNN…QLGR), 213–242 (PANN…AAKL), 245–267 (GSGN…DLYS), 274–308 (IGAV…KLGG), 336–358 (PGTI…AFDK), and 359–391 (GEHV…WWKN). 4 residues coordinate Ca(2+): aspartate 236, aspartate 260, aspartate 261, and aspartate 264. Lysine 305 serves as the catalytic Proton acceptor.

Belongs to the polysaccharide lyase 9 family. The cofactor is Ca(2+).

It is found in the secreted. It carries out the reaction Eliminative cleavage of (1-&gt;4)-alpha-D-galacturonan to give oligosaccharides with 4-deoxy-alpha-D-galact-4-enuronosyl groups at their non-reducing ends.. Its activity is regulated as follows. Activated in presence of the surfactant polysorbate 20, while inhibited in the presence of polysorbate 40, polysorbate 60, polysorbate 80, Triton X-100 and sodium dodecyl sulfate. Inhibited by the metal chelator ethylenediaminetetraacetic acid (EDTA). Inhibited by iron and cobalt ions. Its function is as follows. Presents an endo-cleaving activity on the homogalacturonan (HG) region in pectin with a preference for low- or unmethylated pectin. The polypeptide is Pectate lyase L (Paenibacillus polymyxa (strain SC2) (Bacillus polymyxa)).